We begin with the raw amino-acid sequence, 248 residues long: 2,3-bisphosphoglycerate-dependent phosphoglycerate mutase (248 aa).

Substrate contacts are provided by residues 10-17, 23-24, arginine 62, 89-92, lysine 100, 116-117, and 183-184; these read RHGQSQWN, TG, ERHY, RR, and GN. Catalysis depends on histidine 11, which acts as the Tele-phosphohistidine intermediate. Glutamate 89 functions as the Proton donor/acceptor in the catalytic mechanism.

The protein belongs to the phosphoglycerate mutase family. BPG-dependent PGAM subfamily.

The catalysed reaction is (2R)-2-phosphoglycerate = (2R)-3-phosphoglycerate. It participates in carbohydrate degradation; glycolysis; pyruvate from D-glyceraldehyde 3-phosphate: step 3/5. In terms of biological role, catalyzes the interconversion of 2-phosphoglycerate and 3-phosphoglycerate. This is 2,3-bisphosphoglycerate-dependent phosphoglycerate mutase from Corynebacterium kroppenstedtii (strain DSM 44385 / JCM 11950 / CIP 105744 / CCUG 35717).